Consider the following 550-residue polypeptide: Glypican-1 (550 aa).

The signal sequence occupies residues 1-20 (MRFFPWGFWLLCVASAPARG). 7 cysteine pairs are disulfide-bonded: Cys29–Cys65, Cys59–Cys253, Cys66–Cys256, Cys188–Cys340, Cys243–Cys276, Cys265–Cys412, and Cys269–Cys398. Residues Asn76 and Asn113 are each glycosylated (N-linked (GlcNAc...) asparagine). Asn382 carries an N-linked (GlcNAc...) asparagine glycan. 2 disordered regions span residues 475–494 (FQDASDDMSGSGSGDSCPDD) and 502–522 (KSPSTRQPETHAIPKQSGHGV). A compositionally biased stretch (low complexity) spans 481-494 (DMSGSGSGDSCPDD). Ser483, Ser485, and Ser487 each carry an O-linked (Xyl...) (heparan sulfate) serine glycan. Gly524 carries GPI-anchor amidated glycine lipidation. The propeptide at 525 to 550 (ASSRSLPSAFLLFLSGASIVVQHLWR) is removed in mature form.

Belongs to the glypican family. In terms of processing, O-glycosylated with heparan sulfate.

It localises to the cell membrane. It is found in the endosome. The protein localises to the secreted. The protein resides in the extracellular space. Functionally, cell surface proteoglycan that bears heparan sulfate. Modulates Wnt-signaling pathway. The sequence is that of Glypican-1 (GPC1) from Gallus gallus (Chicken).